A 103-amino-acid polypeptide reads, in one-letter code: Alpha-ketoglutarate dehydrogenase component 4 (103 aa).

The residue at position 1 (Met-1) is an N-acetylmethionine. The residue at position 5 (Lys-5) is an N6-succinyllysine. The disordered stretch occupies residues 23–70; sequence IRFPDRRDNPKPNVSEVLRSAGLPSHTSSISQHSKGSKSPDWLMHQGP. A compositionally biased stretch (low complexity) spans 47-61; sequence SHTSSISQHSKGSKS. Phosphoserine is present on residues Ser-61 and Ser-90.

It belongs to the alpha-ketoglutarate dehydrogenase component 4 family. Component of the 2-oxoglutarate dehydrogenase complex (OGDHC), composed of OGDH (2-oxoglutarate dehydrogenase; also called E1 subunit), DLST (dihydrolipoamide succinyltransferase; also called E2 subunit) and DLD (dihydrolipoamide dehydrogenase; also called E3 subunit), and the assembly factor KGD4. Within OGDHC complex, interacts (via N-terminus) with E3 subunit and (via C-terminus) with E2 subunit.

Its subcellular location is the mitochondrion. Functionally, molecular adapter that is necessary to form a stable 2-oxoglutarate dehydrogenase enzyme complex (OGDHC). Enables the specific recruitment of E3 subunit to E2 subunit in the 2-oxoglutarate dehydrogenase complex (OGDHC). The sequence is that of Alpha-ketoglutarate dehydrogenase component 4 (KGD4) from Bos taurus (Bovine).